Reading from the N-terminus, the 514-residue chain is Maturase K (514 aa).

This sequence belongs to the intron maturase 2 family. MatK subfamily.

The protein resides in the plastid. Its subcellular location is the chloroplast. In terms of biological role, usually encoded in the trnK tRNA gene intron. Probably assists in splicing its own and other chloroplast group II introns. This is Maturase K from Drosophyllum lusitanicum (Portuguese sundew).